The chain runs to 227 residues: Small ribosomal subunit protein uS3 (227 aa).

Positions L38–R106 constitute a KH type-2 domain.

Belongs to the universal ribosomal protein uS3 family. In terms of assembly, part of the 30S ribosomal subunit. Forms a tight complex with proteins S10 and S14.

Binds the lower part of the 30S subunit head. Binds mRNA in the 70S ribosome, positioning it for translation. The sequence is that of Small ribosomal subunit protein uS3 from Syntrophomonas wolfei subsp. wolfei (strain DSM 2245B / Goettingen).